A 369-amino-acid chain; its full sequence is Xylene/toluene monooxygenase hydroxylase component XylM (369 aa).

A run of 3 helical transmembrane segments spans residues 8–28 (LIPV…YWVW), 60–80 (LTQY…VFGV), and 91–111 (LQVA…TLPV). Residues H113, H117, H143, H147, and H148 each coordinate Fe cation. Residues 207-227 (VALLLALPGLVSYLGGPALGL) form a helical membrane-spanning segment. Fe cation contacts are provided by H282, H285, and H286. A helical transmembrane segment spans residues 305 to 325 (MPSLFVCFLLGLIPPLWFALI).

It belongs to the fatty acid desaturase type 1 family. AlkB subfamily. As to quaternary structure, the xylene/toluene monooxygenase is composed of two subunits: the electron transfer component XylA and the hydroxylase component XylM. The cofactor is Fe(2+).

The protein localises to the cell inner membrane. It carries out the reaction m-xylene + 2 reduced [2Fe-2S]-[ferredoxin] + O2 + 2 H(+) = 3-methylbenzyl alcohol + 2 oxidized [2Fe-2S]-[ferredoxin] + H2O. It catalyses the reaction p-xylene + 2 reduced [2Fe-2S]-[ferredoxin] + O2 + 2 H(+) = 4-methylbenzyl alcohol + 2 oxidized [2Fe-2S]-[ferredoxin] + H2O. The catalysed reaction is toluene + 2 reduced [2Fe-2S]-[ferredoxin] + O2 + 2 H(+) = benzyl alcohol + 2 oxidized [2Fe-2S]-[ferredoxin] + H2O. Its function is as follows. Component of a monooxygenase that catalyzes the first step in the degradation of xylenes and toluenes. XylM catalyzes the hydroxylation of the methyl side chain of xylenes and toluenes. The electrons are provided by the electron transfer component XylA. The best substrates are m-xylene and p-xylene, followed by toluene. Shows weak activity with o-xylene. In vitro, is also active with substituted compounds, such as chlorotoluenes. Cannot use benzyl alcohol. This Pseudomonas putida (Arthrobacter siderocapsulatus) protein is Xylene/toluene monooxygenase hydroxylase component XylM.